A 316-amino-acid polypeptide reads, in one-letter code: BTB/POZ domain-containing protein Y57A10B.3 (316 aa).

The first 21 residues, 1–21 (MSAMRRCTCFIICLLTSYTYG), serve as a signal peptide directing secretion. Residues Asn-91, Asn-107, Asn-118, Asn-133, Asn-191, and Asn-260 are each glycosylated (N-linked (GlcNAc...) asparagine). The region spanning 158-226 (RDAVLIVEGK…VHSTATFPND (69 aa)) is the BTB domain.

The protein resides in the secreted. The polypeptide is BTB/POZ domain-containing protein Y57A10B.3 (btb-14) (Caenorhabditis elegans).